The sequence spans 565 residues: Proline--tRNA ligase (565 aa).

Belongs to the class-II aminoacyl-tRNA synthetase family. ProS type 1 subfamily. As to quaternary structure, homodimer.

The protein localises to the cytoplasm. It catalyses the reaction tRNA(Pro) + L-proline + ATP = L-prolyl-tRNA(Pro) + AMP + diphosphate. In terms of biological role, catalyzes the attachment of proline to tRNA(Pro) in a two-step reaction: proline is first activated by ATP to form Pro-AMP and then transferred to the acceptor end of tRNA(Pro). As ProRS can inadvertently accommodate and process non-cognate amino acids such as alanine and cysteine, to avoid such errors it has two additional distinct editing activities against alanine. One activity is designated as 'pretransfer' editing and involves the tRNA(Pro)-independent hydrolysis of activated Ala-AMP. The other activity is designated 'posttransfer' editing and involves deacylation of mischarged Ala-tRNA(Pro). The misacylated Cys-tRNA(Pro) is not edited by ProRS. This Francisella philomiragia subsp. philomiragia (strain ATCC 25017 / CCUG 19701 / FSC 153 / O#319-036) protein is Proline--tRNA ligase.